The chain runs to 394 residues: Exodeoxyribonuclease 7 large subunit (394 aa).

The protein belongs to the XseA family. Heterooligomer composed of large and small subunits.

Its subcellular location is the cytoplasm. The catalysed reaction is Exonucleolytic cleavage in either 5'- to 3'- or 3'- to 5'-direction to yield nucleoside 5'-phosphates.. Its function is as follows. Bidirectionally degrades single-stranded DNA into large acid-insoluble oligonucleotides, which are then degraded further into small acid-soluble oligonucleotides. This is Exodeoxyribonuclease 7 large subunit from Thermotoga petrophila (strain ATCC BAA-488 / DSM 13995 / JCM 10881 / RKU-1).